A 220-amino-acid chain; its full sequence is MASERLPSRPACLLVASGAAEGVSAQSFLHCFTLASAAFNLQVATPGGKTMDFVDVNESNARWVQDFRLKAYASPAKLESIDGARYHALLIPSCPGALVDLASSGSLARILQHFHSESKPICAVGHGVAALCCATSEDRSWVFQGYSVTGPSVYELVRAPGFAHLPLIVEDFVKDAGACFSASEPDAMHVVLDRHLVTGQNASSTVPAVQNLLFLCGSRK.

The N-terminal stretch at 1-35 is a signal peptide; sequence MASERLPSRPACLLVASGAAEGVSAQSFLHCFTLA. 2 N-linked (GlcNAc...) asparagine glycosylation sites follow: Asn57 and Asn201.

Belongs to the peptidase C56 family. As to quaternary structure, homotetramer. Component of the FERRY complex composed of five subunits, TBCK, PPP1R21, FERRY3, CRYZL1 and GATD1 with a ratio of 1:2:1:2:4, respectively.

The protein localises to the secreted. It is found in the early endosome. In terms of biological role, component of the FERRY complex (Five-subunit Endosomal Rab5 and RNA/ribosome intermediary). The FERRY complex directly interacts with mRNAs and RAB5A, and functions as a RAB5A effector involved in the localization and the distribution of specific mRNAs most likely by mediating their endosomal transport. The complex recruits mRNAs and ribosomes to early endosomes through direct mRNA-interaction. The chain is Glutamine amidotransferase-like class 1 domain-containing protein 1 from Bos taurus (Bovine).